The following is a 58-amino-acid chain: Preprotein translocase subunit SecG (58 aa).

Topologically, residues 1-32 (MAQKKKSSGSGLMSSAGLMTYYDADKKAIHVQ) are cytoplasmic. A helical membrane pass occupies residues 33-54 (PKTVFIFGAICGIVILAFSAGF). Topologically, residues 55 to 58 (GLWP) are extracellular.

This sequence belongs to the SEC61-beta family. Component of the protein translocase complex. Heterotrimer consisting of alpha (SecY), beta (SecG) and gamma (SecE) subunits. Can form oligomers of the heterotrimer.

It is found in the cell membrane. Functionally, involved in protein export. The function of the beta subunit is unknown, but it may be involved in stabilization of the trimeric complex. The chain is Preprotein translocase subunit SecG from Methanococcoides burtonii (strain DSM 6242 / NBRC 107633 / OCM 468 / ACE-M).